The following is a 319-amino-acid chain: Inositol phosphoceramide mannosyltransferase 1 (319 aa).

A helical transmembrane segment spans residues 8–28; that stretch reads LLLKGIPICGVILLILWGYSL. Residues Asn115 and Asn198 are each glycosylated (N-linked (GlcNAc...) asparagine). 2 helical membrane-spanning segments follow: residues 211-231 and 279-299; these read PTVF…KYLL and VLFF…RVVF.

This sequence belongs to the glycosyltransferase 32 family.

It is found in the golgi apparatus. The protein resides in the cis-Golgi network membrane. The protein localises to the trans-Golgi network membrane. In terms of biological role, with imt2 and imt3, is required for the synthesis of mannosyl phosphorylinositol ceramide (MIPC). Catalyzes the addition of mannosyl to phosphorylinositol ceramide (IPC). MIPC is essential for cell morphology, cell-surface distribution of ergosterol, localization for plasma-membrane transporters, and lipid-raft-mediated endocytosis of plasma membrane proteins to the vacuole. This is Inositol phosphoceramide mannosyltransferase 1 (imt1) from Schizosaccharomyces pombe (strain 972 / ATCC 24843) (Fission yeast).